Reading from the N-terminus, the 201-residue chain is Dephospho-CoA kinase (201 aa).

The 198-residue stretch at 4–201 (SVGLTGNIAS…KYLREAKIKQ (198 aa)) folds into the DPCK domain. 12–17 (ASGKST) lines the ATP pocket.

The protein belongs to the CoaE family.

It localises to the cytoplasm. The catalysed reaction is 3'-dephospho-CoA + ATP = ADP + CoA + H(+). Its pathway is cofactor biosynthesis; coenzyme A biosynthesis; CoA from (R)-pantothenate: step 5/5. Catalyzes the phosphorylation of the 3'-hydroxyl group of dephosphocoenzyme A to form coenzyme A. The protein is Dephospho-CoA kinase of Legionella pneumophila subsp. pneumophila (strain Philadelphia 1 / ATCC 33152 / DSM 7513).